Here is a 310-residue protein sequence, read N- to C-terminus: uncharacterized protein (310 aa).

It belongs to the YiaX1 family.

This is an uncharacterized protein from Salmonella typhimurium (strain LT2 / SGSC1412 / ATCC 700720).